Consider the following 1172-residue polypeptide: Lysylphosphatidylglycerol biosynthesis bifunctional protein LysX (1172 aa).

The segment at 1-34 (MGLHLTVPGLRRDGRGVQSNSHDTSSKTTADISR) is disordered. Positions 1–663 (MGLHLTVPGL…LLHHDGSAPD (663 aa)) are phosphatidylglycerol lysyltransferase. The span at 17–31 (VQSNSHDTSSKTTAD) shows a compositional bias: polar residues. 7 consecutive transmembrane segments (helical) span residues 80-100 (VPAA…LASV), 122-142 (FPDT…ALTA), 146-166 (IAWL…AAEI), 177-197 (FGEN…VLGY), 214-234 (AVWL…VELF), 272-292 (AIFG…LFLS), and 612-632 (VIPR…LPFS). Residues 664–1172 (VSGLRQVGLT…TLPFPLAKPH (509 aa)) are lysine--tRNA ligase. The OB DNA-binding region spans 726 to 804 (VSVSGRIMRI…SLIVSGWRLI (79 aa)). Mg(2+) contacts are provided by aspartate 1084 and glutamate 1091.

The protein in the N-terminal section; belongs to the LPG synthetase family. It in the C-terminal section; belongs to the class-II aminoacyl-tRNA synthetase family. Requires Mg(2+) as cofactor.

Its subcellular location is the cell membrane. The enzyme catalyses tRNA(Lys) + L-lysine + ATP = L-lysyl-tRNA(Lys) + AMP + diphosphate. It catalyses the reaction L-lysyl-tRNA(Lys) + a 1,2-diacyl-sn-glycero-3-phospho-(1'-sn-glycerol) = a 1,2-diacyl-sn-glycero-3-phospho-1'-(3'-O-L-lysyl)-sn-glycerol + tRNA(Lys). In terms of biological role, catalyzes the production of L-lysyl-tRNA(Lys)transfer and the transfer of a lysyl group from L-lysyl-tRNA(Lys) to membrane-bound phosphatidylglycerol (PG), which produces lysylphosphatidylglycerol (LPG), one of the components of the bacterial membrane with a positive net charge. LPG synthesis contributes to the resistance to cationic antimicrobial peptides (CAMPs) and likely protects M.tuberculosis against the CAMPs produced by competiting microorganisms (bacteriocins). In fact, the modification of anionic phosphatidylglycerol with positively charged L-lysine results in repulsion of the peptides. The sequence is that of Lysylphosphatidylglycerol biosynthesis bifunctional protein LysX (lysX) from Mycobacterium tuberculosis (strain F11).